The sequence spans 107 residues: Quaternary ammonium compound-resistance protein QacC (107 aa).

Over 1 to 2 (MP) the chain is Cytoplasmic. Residues 3 to 20 (YIYLIIAISTEVIGSAFL) form a helical membrane-spanning segment. Over 21-29 (KSSEGFSKF) the chain is Extracellular. Residues 30–47 (IPSLGTIISFGICFYFLS) traverse the membrane as a helical segment. Residues 48–56 (KTMQHLPLN) are Cytoplasmic-facing. A helical membrane pass occupies residues 57 to 75 (ITYATWAGLGLVLTTVVSI). Residues 76–85 (IIFKEQINLI) are Extracellular-facing. The chain crosses the membrane as a helical span at residues 86-103 (TIVSIVLIIVGVVSLNIF). The Cytoplasmic portion of the chain corresponds to 104 to 107 (GTSH).

It belongs to the drug/metabolite transporter (DMT) superfamily. Small multidrug resistance (SMR) (TC 2.A.7.1) family.

It localises to the cell membrane. Its activity is regulated as follows. Ethidium export is inhibited by N-ethylmaleimide (NEM). In terms of biological role, multidrug exporter. Is implicated for the resistance to bacteriocidal quaternary ammonium compounds and ethidium bromide. This Staphylococcus aureus protein is Quaternary ammonium compound-resistance protein QacC.